The following is a 350-amino-acid chain: S-adenosylmethionine:tRNA ribosyltransferase-isomerase (350 aa).

This sequence belongs to the QueA family. In terms of assembly, monomer.

The protein localises to the cytoplasm. The enzyme catalyses 7-aminomethyl-7-carbaguanosine(34) in tRNA + S-adenosyl-L-methionine = epoxyqueuosine(34) in tRNA + adenine + L-methionine + 2 H(+). It participates in tRNA modification; tRNA-queuosine biosynthesis. In terms of biological role, transfers and isomerizes the ribose moiety from AdoMet to the 7-aminomethyl group of 7-deazaguanine (preQ1-tRNA) to give epoxyqueuosine (oQ-tRNA). This chain is S-adenosylmethionine:tRNA ribosyltransferase-isomerase, found in Bacillus cereus (strain G9842).